Consider the following 93-residue polypeptide: DNA/RNA-binding protein Alba (93 aa).

N6-acetyllysine is present on Lys11.

It belongs to the histone-like Alba family. Post-translationally, acetylated. Acetylation at Lys-11 decreases DNA-binding affinity.

It localises to the cytoplasm. The protein localises to the chromosome. Its function is as follows. Binds double-stranded DNA tightly but without sequence specificity. Involved in DNA compaction. The polypeptide is DNA/RNA-binding protein Alba (Pyrococcus abyssi (strain GE5 / Orsay)).